A 498-amino-acid polypeptide reads, in one-letter code: POTE ankyrin domain family member A (498 aa).

5 ANK repeats span residues 98–127 (KKRTALHLACANGNSEVVSLLLDRQCQLHV), 131–160 (KKRTALIKAVQCQEDECALMLLQHGTDPNL), 164–193 (YGNTALHYAVYNEDKLMAKTLLLYGADIES), 197–226 (GGLTPLLLAVHGQKQRMVKFLIKKKANLNA), and 230–259 (FGRTALILAVRCGSASIVSLLLQQNIDVFS). Positions 289–410 (NQMPNNSSGN…SNEKNKVKSQ (122 aa)) are disordered. Residues 290–302 (QMPNNSSGNSNPE) show a composition bias toward polar residues. The span at 303 to 338 (QDLKLTSEEEPQRLKGSENSQHEKVTQEPDINKDCD) shows a compositional bias: basic and acidic residues. Polar residues predominate over residues 348-359 (HGSNNVGLSENL). Over residues 392–406 (EEYHRPEKKSNEKNK) the composition is skewed to basic and acidic residues. Residues 469-497 (EHLLELKNSHYEQLTVEVEQMENMVHVLQ) are a coiled coil.

This sequence belongs to the POTE family.

The chain is POTE ankyrin domain family member A (POTEA) from Homo sapiens (Human).